The sequence spans 890 residues: DNA mismatch repair protein MutS (890 aa).

607–614 (GPNMSGKS) provides a ligand contact to ATP.

The protein belongs to the DNA mismatch repair MutS family.

In terms of biological role, this protein is involved in the repair of mismatches in DNA. It is possible that it carries out the mismatch recognition step. This protein has a weak ATPase activity. This chain is DNA mismatch repair protein MutS, found in Bacillus mycoides (strain KBAB4) (Bacillus weihenstephanensis).